Consider the following 370-residue polypeptide: DNA primase small subunit PriS (370 aa).

Active-site residues include Asp-92, Asp-94, and Asp-272.

This sequence belongs to the eukaryotic-type primase small subunit family. As to quaternary structure, heterodimer of a small subunit (PriS) and a large subunit (PriL). The cofactor is Mg(2+). It depends on Mn(2+) as a cofactor.

Functionally, catalytic subunit of DNA primase, an RNA polymerase that catalyzes the synthesis of short RNA molecules used as primers for DNA polymerase during DNA replication. The small subunit contains the primase catalytic core and has DNA synthesis activity on its own. Binding to the large subunit stabilizes and modulates the activity, increasing the rate of DNA synthesis while decreasing the length of the DNA fragments, and conferring RNA synthesis capability. The DNA polymerase activity may enable DNA primase to also catalyze primer extension after primer synthesis. May also play a role in DNA repair. The polypeptide is DNA primase small subunit PriS (Picrophilus torridus (strain ATCC 700027 / DSM 9790 / JCM 10055 / NBRC 100828 / KAW 2/3)).